An 852-amino-acid chain; its full sequence is Vacuolar protein sorting-associated protein 16 homolog (852 aa).

Belongs to the VPS16 family. Probable core component of at least two putative endosomal tethering complexes, the homotypic fusion and vacuole protein sorting (HOPS) complex and the class C core vacuole/endosome tethering (CORVET) complex. Their common core is composed of the class C Vps proteins vps-11, vps-16 and vps-18, which in HOPS further associates with vps-33.1, vps-39 and vps-41 and in CORVET with vps-8 and vps-33.2.

Its subcellular location is the late endosome membrane. The protein localises to the lysosome membrane. Functionally, plays a role in vesicle-mediated protein trafficking to lysosomal compartments including the endocytic membrane transport pathways. Believed to act as a core component of the putative HOPS and CORVET endosomal tethering complexes which are proposed to be involved in the rab-5-to-rab-7 endosome conversion probably implicating sand-1, and via binding SNAREs and SNARE complexes to mediate tethering and docking events during SNARE-mediated membrane fusion. The HOPS complex is proposed to be recruited to rab-7 on the late endosomal membrane and to regulate late endocytic, phagocytic and autophagic traffic towards lysosomes. Within the HOPS complex, contributes to the normal development of gut granules in the adult intestine. The CORVET complex is proposed to function as a rab-5 effector to mediate early endosome fusion probably in specific endosome subpopulations. Required for recruitment of vps-33.1 to the HOPS complex. Required for fusion of endosomes and autophagosomes with lysosomes; the function is dependent on its association with vps-33.1 but not vps-33.2. The polypeptide is Vacuolar protein sorting-associated protein 16 homolog (Caenorhabditis elegans).